Reading from the N-terminus, the 198-residue chain is Recombination protein RecR (198 aa).

The segment at 57 to 72 (CSVCGRLTDDDPCSIC) adopts a C4-type zinc-finger fold. One can recognise a Toprim domain in the interval 80–175 (TTILVLEDSR…KVTRLARGLA (96 aa)).

The protein belongs to the RecR family.

Functionally, may play a role in DNA repair. It seems to be involved in an RecBC-independent recombinational process of DNA repair. It may act with RecF and RecO. The chain is Recombination protein RecR from Streptococcus pneumoniae (strain Hungary19A-6).